Here is a 176-residue protein sequence, read N- to C-terminus: N-alpha-acetyltransferase 30 (176 aa).

Residues 3–159 form the N-acetyltransferase domain; the sequence is IVYKPLDIRN…DAFKLILPLT (157 aa).

Belongs to the acetyltransferase family. MAK3 subfamily. Component of the N-terminal acetyltransferase C (NatC) complex, which is composed of MAK3, MAK10 and MAK31.

Its subcellular location is the cytoplasm. It is found in the nucleus. It catalyses the reaction N-terminal L-methionyl-L-leucyl-[protein] + acetyl-CoA = N-terminal N(alpha)-acetyl-L-methionyl-L-leucyl-[protein] + CoA + H(+). It carries out the reaction N-terminal L-methionyl-L-isoleucyl-[protein] + acetyl-CoA = N-terminal N(alpha)-acetyl-L-methionyl-L-isoleucyl-[protein] + CoA + H(+). The enzyme catalyses N-terminal L-methionyl-L-phenylalanyl-[protein] + acetyl-CoA = N-terminal N(alpha)-acetyl-L-methionyl-L-phenylalanyl-[protein] + CoA + H(+). The catalysed reaction is N-terminal L-methionyl-L-tryptophyl-[protein] + acetyl-CoA = N-terminal N(alpha)-acetyl-L-methionyl-L-tryptophyl-[protein] + CoA + H(+). It catalyses the reaction N-terminal L-methionyl-L-tyrosyl-[protein] + acetyl-CoA = N-terminal N(alpha)-acetyl-L-methionyl-L-tyrosyl-[protein] + CoA + H(+). Functionally, catalytic component of the NatC N-terminal acetyltransferase, which catalyzes acetylation of the N-terminus Met of L-A virus GAG protein and possibly GRH1. This is N-alpha-acetyltransferase 30 (MAK3) from Saccharomyces cerevisiae (strain ATCC 204508 / S288c) (Baker's yeast).